The sequence spans 462 residues: ATP synthase subunit beta (462 aa).

150-157 (GGAGVGKT) is an ATP binding site.

Belongs to the ATPase alpha/beta chains family. As to quaternary structure, F-type ATPases have 2 components, CF(1) - the catalytic core - and CF(0) - the membrane proton channel. CF(1) has five subunits: alpha(3), beta(3), gamma(1), delta(1), epsilon(1). CF(0) has three main subunits: a(1), b(2) and c(9-12). The alpha and beta chains form an alternating ring which encloses part of the gamma chain. CF(1) is attached to CF(0) by a central stalk formed by the gamma and epsilon chains, while a peripheral stalk is formed by the delta and b chains. In this bacterium the a and b subunits are transcribed but do not seem to be translated, thus the ATP synthase consists of the alpha, beta, gamma, delta, epsilon and c subunits.

The protein localises to the cell membrane. The enzyme catalyses ATP + H2O + 4 H(+)(in) = ADP + phosphate + 5 H(+)(out). Its function is as follows. Produces ATP from ADP in the presence of a proton gradient across the membrane. The catalytic sites are hosted primarily by the beta subunits. The chain is ATP synthase subunit beta from Moorella thermoacetica (strain ATCC 39073 / JCM 9320).